Consider the following 124-residue polypeptide: Small ribosomal subunit protein uS12 (124 aa).

Aspartate 89 is modified (3-methylthioaspartic acid). The disordered stretch occupies residues 104 to 124 (SAGVQNRNRGRSKYGTKRPKK). Over residues 111 to 124 (NRGRSKYGTKRPKK) the composition is skewed to basic residues.

It belongs to the universal ribosomal protein uS12 family. In terms of assembly, part of the 30S ribosomal subunit. Contacts proteins S8 and S17. May interact with IF1 in the 30S initiation complex.

With S4 and S5 plays an important role in translational accuracy. In terms of biological role, interacts with and stabilizes bases of the 16S rRNA that are involved in tRNA selection in the A site and with the mRNA backbone. Located at the interface of the 30S and 50S subunits, it traverses the body of the 30S subunit contacting proteins on the other side and probably holding the rRNA structure together. The combined cluster of proteins S8, S12 and S17 appears to hold together the shoulder and platform of the 30S subunit. This chain is Small ribosomal subunit protein uS12, found in Desulforamulus reducens (strain ATCC BAA-1160 / DSM 100696 / MI-1) (Desulfotomaculum reducens).